The sequence spans 769 residues: Cap-specific mRNA (nucleoside-2'-O-)-methyltransferase 2 (769 aa).

An Adrift-type SAM-dependent 2'-O-MTase domain is found at 109–322 (ELCTQAWCKF…VYVVCLYYKG (214 aa)). The active site involves Lys-117. Residues Gly-148, Trp-167, and Asp-235 each contribute to the S-adenosyl-L-methionine site. Asp-235 is an active-site residue. The active-site Proton acceptor is Lys-275.

It localises to the nucleus. The protein localises to the cytoplasm. It carries out the reaction a 5'-end (N(7)-methyl 5'-triphosphoguanosine)-(2'-O-methyl-ribonucleoside)-(ribonucleotide) in mRNA + S-adenosyl-L-methionine = a 5'-end (N(7)-methyl 5'-triphosphoguanosine)-(2'-O-methyl-ribonucleoside)-(2'-O-methyl-ribonucleotide) in mRNA + S-adenosyl-L-homocysteine + H(+). Its function is as follows. S-adenosyl-L-methionine-dependent methyltransferase that mediates mRNA cap2 2'-O-ribose methylation to the 5'-cap structure of mRNAs. Methylates the ribose of the second nucleotide of a m(7)GpppG-capped mRNA and small nuclear RNA (snRNA) (cap0) to produce m(7)GpppRmpNm (cap2). Recognizes a guanosine cap on RNA independently of its N(7) methylation status. Display cap2 methylation on both cap0 and cap1. Displays a preference for cap1 RNAs. The chain is Cap-specific mRNA (nucleoside-2'-O-)-methyltransferase 2 (CMTR2) from Pongo abelii (Sumatran orangutan).